Reading from the N-terminus, the 230-residue chain is Inactive L-threonine 3-dehydrogenase, mitochondrial (230 aa).

Belongs to the NAD(P)-dependent epimerase/dehydratase family. Expressed in all tissues examined. Detected in most cell types examined, but not observed in endothelial cells, glioma cell lines and some leukemia cell lines.

The protein resides in the mitochondrion. The polypeptide is Inactive L-threonine 3-dehydrogenase, mitochondrial (Homo sapiens (Human)).